We begin with the raw amino-acid sequence, 357 residues long: Nitronate monooxygenase npaC (357 aa).

FMN is bound by residues Q167, G172, and G206.

The protein belongs to the nitronate monooxygenase family. NMO class I subfamily. FMN is required as a cofactor.

In terms of biological role, nitronate monooxygenase; part of the gene cluster that mediates the biosynthesis of the deadly neurotoxic nitroalkane 3-nitropropanoic acid (3-NPA) that acts as an antimetabolite of succinate and irreversibly inhibits succinate dehydrogenase and disrupts mitochondrial oxidative phosphorylation. Catalyzes the oxidation of 3-NPA to nitrite and malonic semialdehyde. NpaC is not conserved in all fungal npa clusters and, while it is possible that it serves as a self-protection mechanism against accumulation of 3-NPA (by npaA and npaB) in the producing host, the more likely scenario may be the three enzymes representing an alternative catabolic pathway of aspartate to generate readily metabolizable nitrogen and carbon sources. This is Nitronate monooxygenase npaC from Metarhizium robertsii (strain ARSEF 23 / ATCC MYA-3075) (Metarhizium anisopliae (strain ARSEF 23)).